The chain runs to 305 residues: Tyrosine recombinase XerC (305 aa).

Positions 4–95 (TSIQELIDKW…AVKNFYRFLE (92 aa)) constitute a Core-binding (CB) domain. The Tyr recombinase domain occupies 116–298 (LLPKALSEDD…SIKHLEAVYT (183 aa)). Active-site residues include R159, K182, H250, R253, and H276. The O-(3'-phospho-DNA)-tyrosine intermediate role is filled by Y285.

Belongs to the 'phage' integrase family. XerC subfamily. In terms of assembly, forms a cyclic heterotetrameric complex composed of two molecules of XerC and two molecules of XerD.

Its subcellular location is the cytoplasm. In terms of biological role, site-specific tyrosine recombinase, which acts by catalyzing the cutting and rejoining of the recombining DNA molecules. The XerC-XerD complex is essential to convert dimers of the bacterial chromosome into monomers to permit their segregation at cell division. It also contributes to the segregational stability of plasmids. This chain is Tyrosine recombinase XerC, found in Rickettsia felis (strain ATCC VR-1525 / URRWXCal2) (Rickettsia azadi).